We begin with the raw amino-acid sequence, 3391 residues long: Genome polyprotein (3391 aa).

Residues 1-15 (MNNQRKKARSTPFNM) form an interaction with host EXOC1 region. Residues 1-101 (MNNQRKKARS…LNILNRRRRT (101 aa)) are Cytoplasmic-facing. The tract at residues 37 to 72 (MLQGRGPLKLFMALVAFLRFLTIPPTAGILKRWGTI) is hydrophobic; homodimerization of capsid protein C. Positions 101-114 (TAGVIIMLIPTAMA) are cleaved as a propeptide — ER anchor for the capsid protein C, removed in mature form by serine protease NS3. A helical membrane pass occupies residues 102–119 (AGVIIMLIPTAMAFHLTT). Residues 120–241 (RNGEPHMIVG…KHVQRIETWI (122 aa)) are Extracellular-facing. Residue N183 is glycosylated (N-linked (GlcNAc...) asparagine; by host). A helical membrane pass occupies residues 242–259 (LRHPGFTIMAAILAYTIG). The Cytoplasmic segment spans residues 260 to 265 (TTHFQR). The chain crosses the membrane as a helical span at residues 266–280 (ALIFILLTAVAPSMT). At 281–725 (MRCIGISNRD…LHQVFGAIYG (445 aa)) the chain is on the extracellular side. 4 disulfides stabilise this stretch: C283–C310, C340–C401, C354–C385, and C372–C396. N-linked (GlcNAc...) asparagine; by host glycosylation is present at N347. A fusion peptide region spans residues 378-391 (DRGWGNGCGLFGKG). The N-linked (GlcNAc...) asparagine; by host glycan is linked to N433. 2 cysteine pairs are disulfide-bonded: C465/C565 and C582/C613. A helical membrane pass occupies residues 726 to 746 (AAFSGVSWTMKILIGVIITWI). Over 747 to 752 (GMNSRS) the chain is Cytoplasmic. A helical membrane pass occupies residues 753 to 773 (TSLSVSLVLVGVVTLYLGAMV). Residues 774 to 1195 (QADSGCVVSW…MVGATMTDDI (422 aa)) are Extracellular-facing. 6 disulfide bridges follow: C779–C790, C830–C918, C954–C998, C1055–C1104, C1066–C1088, and C1087–C1091. N-linked (GlcNAc...) asparagine; by host glycosylation is found at N905 and N982. N1134 carries an N-linked (GlcNAc...) asparagine; by host glycan. Residues 1196–1220 (GMGVTYLALLAAFKVRPTFAAGLLL) form a helical membrane-spanning segment. Topologically, residues 1221–1226 (RKLTSK) are cytoplasmic. A helical transmembrane segment spans residues 1227 to 1245 (ELMMATIGIALLSQSTIPE). The Lumenal segment spans residues 1246-1269 (TILELTDALALGMMVLKIVRNMEK). Residues 1270–1290 (YQLAVTIMAILCVPNAVILQN) form a helical membrane-spanning segment. Position 1291 (A1291) is a topological domain, cytoplasmic. The helical transmembrane segment at 1292–1310 (WKVSCTILAAVSVSPLLLT) threads the bilayer. Over 1311–1317 (SSQQKAD) the chain is Lumenal. The helical transmembrane segment at 1318-1338 (WIPLALTIKGLNPTAIFLTTL) threads the bilayer. The Cytoplasmic portion of the chain corresponds to 1339–1346 (SRTSKKRS). The chain crosses the membrane as a helical span at residues 1347 to 1367 (WPLNEAIMAVGMVSILASSLL). Topologically, residues 1368–1370 (KND) are lumenal. A helical transmembrane segment spans residues 1371-1391 (IPMTGPLVAGGLLTVCYVLTG). The Cytoplasmic segment spans residues 1392 to 1447 (RSADLELERAADVKWEDQAEISGSSPILSITISEDGSMSIKNEEEEQTLTILIRTG). Residues 1398–1437 (LERAADVKWEDQAEISGSSPILSITISEDGSMSIKNEEEE) are interacts with and activates NS3 protease. Positions 1448-1468 (LLVISGVFPVSIPITAAAWYL) form an intramembrane region, helical. Over 1469–2147 (WEVKKQRAGV…LSELPETLET (679 aa)) the chain is Cytoplasmic. One can recognise a Peptidase S7 domain in the interval 1476-1653 (AGVLWDVPSP…EKSIEDNPEI (178 aa)). Catalysis depends on charge relay system; for serine protease NS3 activity residues H1526, D1550, and S1610. Residues 1655–1811 (DDIFRKKRLT…QSNAPIMDEE (157 aa)) enclose the Helicase ATP-binding domain. The important for RNA-binding stretch occupies residues 1659–1662 (RKKR). An ATP-binding site is contributed by 1668–1675 (LHPGAGKT). A DEAH box motif is present at residues 1759–1762 (DEAH). The region spanning 1821 to 1988 (SGHEWVTDFK…IIPSMFEPER (168 aa)) is the Helicase C-terminal domain. K1863 carries the post-translational modification N6-acetyllysine; by host. The chain crosses the membrane as a helical span at residues 2148–2168 (LLLLTLLATVTGGIFLFLMSG). The Lumenal segment spans residues 2169-2170 (KG). Positions 2171 to 2191 (IGKMTLGMCCIITASILLWYA) form an intramembrane region, helical. Position 2192 (Q2192) is a topological domain, lumenal. The helical transmembrane segment at 2193 to 2213 (IQPHWIAASIILEFFLIVLLI) threads the bilayer. Topologically, residues 2214–2228 (PEPEKQRTPQDNQLT) are cytoplasmic. A helical membrane pass occupies residues 2229–2249 (YVVIAILTVVAATMANEMGFL). At 2250–2274 (EKTKKDLGLGSITTQESESNILDID) the chain is on the lumenal side. Positions 2275 to 2295 (LRPASAWTLYAVATTFVTPML) form an intramembrane region, helical. Residues 2296–2316 (RHSIENSSVNVSLTAIANQAT) are Lumenal-facing. N-linked (GlcNAc...) asparagine; by host glycans are attached at residues N2301 and N2305. Residues 2317–2337 (VLMGLGKGWPLSKIHIGVPLL) constitute an intramembrane region (helical). At 2338 to 2347 (AIGCYSQVNP) the chain is on the lumenal side. The helical transmembrane segment at 2348–2368 (ITLTAALLLLVAHYAIIGPGL) threads the bilayer. Residues 2369–2413 (QAKATREAQKRAAAGIMKNPTVDGITVIDLDPIPYDPKFEKQLGQ) lie on the Cytoplasmic side of the membrane. The helical transmembrane segment at 2414-2434 (VMLLILCVTQVLMMRTTWALC) threads the bilayer. The Lumenal segment spans residues 2435–2459 (EALTLATGPISTLWEGNPGRFWNTT). N2457 carries N-linked (GlcNAc...) asparagine; by host glycosylation. The chain crosses the membrane as a helical span at residues 2460–2480 (IAVSMANIFRGSYLAGAGLLF). The Cytoplasmic segment spans residues 2481–3391 (SIMKNTTNTR…REEEEAGVLW (911 aa)). Positions 2493–2755 (TGNIGETLGE…DVDLGSGTRN (263 aa)) constitute an mRNA cap 0-1 NS5-type MT domain. S-adenosyl-L-methionine is bound at residue S2547. S2547 carries the post-translational modification Phosphoserine. The active-site For 2'-O-MTase activity is K2552. The SUMO-interacting motif signature appears at 2568-2571 (VVDL). The S-adenosyl-L-methionine site is built by G2577, W2578, T2595, K2596, D2622, and V2623. Catalysis depends on D2637, which acts as the For 2'-O-MTase activity. Position 2638 (I2638) interacts with S-adenosyl-L-methionine. Active-site for 2'-O-MTase activity residues include K2672 and E2708. Residue Y2710 participates in S-adenosyl-L-methionine binding. Residues E2929, H2933, C2938, and C2941 each contribute to the Zn(2+) site. A RdRp catalytic domain is found at 3020 to 3169 (AMYADDTAGW…PLDDRFASAL (150 aa)). Zn(2+)-binding residues include H3203, C3219, and C3338.

This sequence in the N-terminal section; belongs to the class I-like SAM-binding methyltransferase superfamily. mRNA cap 0-1 NS5-type methyltransferase family. Homodimer. Interacts (via N-terminus) with host EXOC1 (via C-terminus); this interaction results in EXOC1 degradation through the proteasome degradation pathway. As to quaternary structure, forms heterodimers with envelope protein E in the endoplasmic reticulum and Golgi. In terms of assembly, homodimer; in the endoplasmic reticulum and Golgi. Interacts with protein prM. Interacts with non-structural protein 1. Homodimer; Homohexamer when secreted. Interacts with envelope protein E. Interacts with host PRKAA1. As to quaternary structure, interacts (via N-terminus) with serine protease NS3. In terms of assembly, forms a heterodimer with serine protease NS3. May form homooligomers. Forms a heterodimer with NS2B. Interacts with NS4B. Interacts with unphosphorylated RNA-directed RNA polymerase NS5; this interaction stimulates RNA-directed RNA polymerase NS5 guanylyltransferase activity. Interacts with host SHFL. As to quaternary structure, interacts with host MAVS; this interaction inhibits the synthesis of IFN-beta. Interacts with host SHFL. Interacts with host AUP1; the interaction occurs in the presence of Dengue virus NS4B and induces lipophagy which facilitates production of virus progeny particles. May interact with host SRPRA and SEC61G. In terms of assembly, interacts with serine protease NS3. Homodimer. Interacts with host STAT2; this interaction inhibits the phosphorylation of the latter, and, when all viral proteins are present (polyprotein), targets STAT2 for degradation. Interacts with serine protease NS3. Interacts with host PAF1 complex; the interaction may prevent the recruitment of the PAF1 complex to interferon-responsive genes, and thus reduces the immune response. In terms of processing, specific enzymatic cleavages in vivo yield mature proteins. Cleavages in the lumen of endoplasmic reticulum are performed by host signal peptidase, whereas cleavages in the cytoplasmic side are performed by serine protease NS3. Signal cleavage at the 2K-4B site requires a prior NS3 protease-mediated cleavage at the 4A-2K site. Cleaved in post-Golgi vesicles by a host furin, releasing the mature small envelope protein M, and peptide pr. This cleavage is incomplete as up to 30% of viral particles still carry uncleaved prM. Post-translationally, N-glycosylated. In terms of processing, N-glycosylated. The excreted form is glycosylated and this is required for efficient secretion of the protein from infected cells. Acetylated by host KAT5. Acetylation modulates NS3 RNA-binding and unwinding activities and plays an important positive role for viral replication. Post-translationally, sumoylation of RNA-directed RNA polymerase NS5 increases NS5 protein stability allowing proper viral RNA replication. In terms of processing, phosphorylated on serines residues. This phosphorylation may trigger NS5 nuclear localization.

Its subcellular location is the virion. The protein resides in the host nucleus. It is found in the host cytoplasm. It localises to the host perinuclear region. The protein localises to the secreted. Its subcellular location is the virion membrane. The protein resides in the host endoplasmic reticulum membrane. It is found in the host mitochondrion. It catalyses the reaction Selective hydrolysis of -Xaa-Xaa-|-Yaa- bonds in which each of the Xaa can be either Arg or Lys and Yaa can be either Ser or Ala.. It carries out the reaction RNA(n) + a ribonucleoside 5'-triphosphate = RNA(n+1) + diphosphate. The enzyme catalyses a ribonucleoside 5'-triphosphate + H2O = a ribonucleoside 5'-diphosphate + phosphate + H(+). The catalysed reaction is ATP + H2O = ADP + phosphate + H(+). It catalyses the reaction a 5'-end (5'-triphosphoguanosine)-ribonucleoside in mRNA + S-adenosyl-L-methionine = a 5'-end (N(7)-methyl 5'-triphosphoguanosine)-ribonucleoside in mRNA + S-adenosyl-L-homocysteine. It carries out the reaction a 5'-end (N(7)-methyl 5'-triphosphoguanosine)-ribonucleoside in mRNA + S-adenosyl-L-methionine = a 5'-end (N(7)-methyl 5'-triphosphoguanosine)-(2'-O-methyl-ribonucleoside) in mRNA + S-adenosyl-L-homocysteine + H(+). Functionally, plays a role in virus budding by binding to the cell membrane and gathering the viral RNA into a nucleocapsid that forms the core of a mature virus particle. During virus entry, may induce genome penetration into the host cytoplasm after hemifusion induced by the surface proteins. Can migrate to the cell nucleus where it modulates host functions. Overcomes the anti-viral effects of host EXOC1 by sequestering and degrading the latter through the proteasome degradation pathway. Its function is as follows. Inhibits RNA silencing by interfering with host Dicer. In terms of biological role, prevents premature fusion activity of envelope proteins in trans-Golgi by binding to envelope protein E at pH6.0. After virion release in extracellular space, gets dissociated from E dimers. Acts as a chaperone for envelope protein E during intracellular virion assembly by masking and inactivating envelope protein E fusion peptide. prM is the only viral peptide matured by host furin in the trans-Golgi network probably to avoid catastrophic activation of the viral fusion activity in acidic Golgi compartment prior to virion release. prM-E cleavage is inefficient, and many virions are only partially matured. These uncleaved prM would play a role in immune evasion. Functionally, may play a role in virus budding. Exerts cytotoxic effects by activating a mitochondrial apoptotic pathway through M ectodomain. May display a viroporin activity. Its function is as follows. Binds to host cell surface receptor and mediates fusion between viral and cellular membranes. Envelope protein is synthesized in the endoplasmic reticulum in the form of heterodimer with protein prM. They play a role in virion budding in the ER, and the newly formed immature particle is covered with 60 spikes composed of heterodimer between precursor prM and envelope protein E. The virion is transported to the Golgi apparatus where the low pH causes dissociation of PrM-E heterodimers and formation of E homodimers. prM-E cleavage is inefficient, and many virions are only partially matured. These uncleaved prM would play a role in immune evasion. In terms of biological role, involved in immune evasion, pathogenesis and viral replication. Once cleaved off the polyprotein, is targeted to three destinations: the viral replication cycle, the plasma membrane and the extracellular compartment. Essential for viral replication. Required for formation of the replication complex and recruitment of other non-structural proteins to the ER-derived membrane structures. Excreted as a hexameric lipoparticle that plays a role against host immune response. Antagonizing the complement function. Binds to the host macrophages and dendritic cells. Inhibits signal transduction originating from Toll-like receptor 3 (TLR3). Involved in immune evasion, pathogenesis and viral replication. Once cleaved off the polyprotein, is targeted to three destinations: the viral replication cycle, the plasma membrane and the extracellular compartment. Essential for viral replication. Required for formation of the replication complex and recruitment of other non-structural proteins to the ER-derived membrane structures. Excreted as a hexameric lipoparticle that plays a role against host immune response. Antagonizing the complement function. Binds to the host macrophages and dendritic cells. Inhibits signal transduction originating from Toll-like receptor 3 (TLR3). Mediates complement activation, which may contribute to the pathogenesis of the vascular leakage that occurs in severe dengue disease. Activates autophagy through the AMPK/ERK/mTOR signaling pathway. Mechanistically, acts as the assembly platform for STK11-AMPK interactions and promotes STK11-AMPK interactions. In turn, promotes phosphorylation of the AMPK kinase structural domain and activates AMPK, thereby positively regulating the AMPK/ERK/mTOR signaling pathway and inducing autophagy. Functionally, component of the viral RNA replication complex that functions in virion assembly and antagonizes the host immune response. Its function is as follows. Required cofactor for the serine protease function of NS3. May have membrane-destabilizing activity and form viroporins. In terms of biological role, displays three enzymatic activities: serine protease, NTPase and RNA helicase. NS3 serine protease, in association with NS2B, performs its autocleavage and cleaves the polyprotein at dibasic sites in the cytoplasm: C-prM, NS2A-NS2B, NS2B-NS3, NS3-NS4A, NS4A-2K and NS4B-NS5. NS3 RNA helicase binds RNA and unwinds dsRNA in the 3' to 5' direction. Regulates the ATPase activity of the NS3 helicase activity. NS4A allows NS3 helicase to conserve energy during unwinding. Plays a role in the inhibition of the host innate immune response. Interacts with host MAVS and thereby prevents the interaction between RIGI and MAVS. In turn, IFN-beta production is impaired. Interacts with host AUP1 which mediates induction of lipophagy in host cells and facilitates production of virus progeny particles. Functionally, functions as a signal peptide for NS4B and is required for the interferon antagonism activity of the latter. Its function is as follows. Induces the formation of ER-derived membrane vesicles where the viral replication takes place. Inhibits interferon (IFN)-induced host STAT1 phosphorylation and nuclear translocation, thereby preventing the establishment of cellular antiviral state by blocking the IFN-alpha/beta pathway. In terms of biological role, replicates the viral (+) and (-) RNA genome, and performs the capping of genomes in the cytoplasm. NS5 methylates viral RNA cap at guanine N-7 and ribose 2'-O positions. Besides its role in RNA genome replication, also prevents the establishment of cellular antiviral state by blocking the interferon-alpha/beta (IFN-alpha/beta) signaling pathway. Inhibits host TYK2 and STAT2 phosphorylation, thereby preventing activation of JAK-STAT signaling pathway. May reduce immune responses by preventing the recruitment of the host PAF1 complex to interferon-responsive genes. In Dengue virus type 2 (strain Jamaica/1409/1983) (DENV-2), this protein is Genome polyprotein.